We begin with the raw amino-acid sequence, 91 residues long: Cytochrome b-c1 complex subunit 6, mitochondrial (91 aa).

A mitochondrion-targeting transit peptide spans 1–13; that stretch reads MGLEDEQKMLTES. Residues 1–30 form a disordered region; sequence MGLEDEQKMLTESGDPEEEEEEEEELVDPL. Residues 14–27 are compositionally biased toward acidic residues; sequence GDPEEEEEEEEELV. Cystine bridges form between cysteine 37–cysteine 81 and cysteine 53–cysteine 67. The residue at position 42 (lysine 42) is an N6-acetyllysine. Position 85 is an N6-acetyllysine (lysine 85).

It belongs to the UQCRH/QCR6 family. Component of the ubiquinol-cytochrome c oxidoreductase (cytochrome b-c1 complex, complex III, CIII), a multisubunit enzyme composed of 11 subunits. The complex is composed of 3 respiratory subunits cytochrome b, cytochrome c1 and Rieske protein UQCRFS1, 2 core protein subunits UQCRC1/QCR1 and UQCRC2/QCR2, and 6 low-molecular weight protein subunits UQCRH/QCR6, UQCRB/QCR7, UQCRQ/QCR8, UQCR10/QCR9, UQCR11/QCR10 and subunit 9, the cleavage product of Rieske protein UQCRFS1. The complex exists as an obligatory dimer and forms supercomplexes (SCs) in the inner mitochondrial membrane with NADH-ubiquinone oxidoreductase (complex I, CI) and cytochrome c oxidase (complex IV, CIV), resulting in different assemblies (supercomplex SCI(1)III(2)IV(1) and megacomplex MCI(2)III(2)IV(2)).

It localises to the mitochondrion inner membrane. In terms of biological role, component of the ubiquinol-cytochrome c oxidoreductase, a multisubunit transmembrane complex that is part of the mitochondrial electron transport chain which drives oxidative phosphorylation. The respiratory chain contains 3 multisubunit complexes succinate dehydrogenase (complex II, CII), ubiquinol-cytochrome c oxidoreductase (cytochrome b-c1 complex, complex III, CIII) and cytochrome c oxidase (complex IV, CIV), that cooperate to transfer electrons derived from NADH and succinate to molecular oxygen, creating an electrochemical gradient over the inner membrane that drives transmembrane transport and the ATP synthase. The cytochrome b-c1 complex catalyzes electron transfer from ubiquinol to cytochrome c, linking this redox reaction to translocation of protons across the mitochondrial inner membrane, with protons being carried across the membrane as hydrogens on the quinol. In the process called Q cycle, 2 protons are consumed from the matrix, 4 protons are released into the intermembrane space and 2 electrons are passed to cytochrome c. This is Cytochrome b-c1 complex subunit 6, mitochondrial (UQCRH) from Homo sapiens (Human).